The chain runs to 560 residues: Probable pectinesterase/pectinesterase inhibitor 20 (560 aa).

Residues 1 to 24 (MSQKLMFLFTLACLSSLPSPFISA) form the signal peptide. Residues 25–179 (QIPAIGNATS…TKLYGVSLAL (155 aa)) form a pectinesterase inhibitor 20 region. 7 N-linked (GlcNAc...) asparagine glycosylation sites follow: asparagine 31, asparagine 168, asparagine 251, asparagine 255, asparagine 268, asparagine 307, and asparagine 314. Positions 246–544 (VTVIQNGTGN…FTVTNFLVGE (299 aa)) are pectinesterase 20. Threonine 323 lines the substrate pocket. Asparagine 340 carries N-linked (GlcNAc...) asparagine glycosylation. Glutamine 353 contacts substrate. Residue aspartate 376 is the Proton donor; for pectinesterase activity of the active site. Cysteine 390 and cysteine 410 form a disulfide bridge. Residue aspartate 397 is the Nucleophile; for pectinesterase activity of the active site. Positions 417 to 441 (PRKGQSNEVTAQGRTDPNQNTGTAI) are disordered. Positions 419–439 (KGQSNEVTAQGRTDPNQNTGT) are enriched in polar residues. A glycan (N-linked (GlcNAc...) asparagine) is linked at asparagine 456. The substrate site is built by arginine 465 and tryptophan 467. 3 N-linked (GlcNAc...) asparagine glycosylation sites follow: asparagine 507, asparagine 528, and asparagine 534.

The protein in the N-terminal section; belongs to the PMEI family. In the C-terminal section; belongs to the pectinesterase family. In terms of tissue distribution, expressed in flower buds.

Its subcellular location is the secreted. It is found in the cell wall. It catalyses the reaction [(1-&gt;4)-alpha-D-galacturonosyl methyl ester](n) + n H2O = [(1-&gt;4)-alpha-D-galacturonosyl](n) + n methanol + n H(+). Its pathway is glycan metabolism; pectin degradation; 2-dehydro-3-deoxy-D-gluconate from pectin: step 1/5. Functionally, acts in the modification of cell walls via demethylesterification of cell wall pectin. This Arabidopsis thaliana (Mouse-ear cress) protein is Probable pectinesterase/pectinesterase inhibitor 20 (PME20).